A 226-amino-acid polypeptide reads, in one-letter code: Charged multivesicular body protein 4 (226 aa).

Residues 22 to 88 (IQKLRETENM…DGTLSTIEMQ (67 aa)) are a coiled coil. Positions 169-226 (QENFDKEIIGIPEPTPTLPEAPTEDLPEKAKEKKKATTTTAVEDDDDPDMKQLLSWSN) are disordered.

Belongs to the SNF7 family. Homopolymer; forms elongated striated filaments of uniform ~10nm width. Monomers interact in a staggered arrangement mediated by complementary charged electrostatic surfaces. Interacts with l(2)gd1 (via DM14 domains 1 and 3); the interaction is direct and blocks access to the surface involved in homopolymerization. This interaction may be required for the ESCRT-III complex role in multivesicular body formation. As to expression, expressed at considerably higher levels in testis than in ovary. Expressed in midgut, eye, mouthparts and male accessory gland.

It localises to the endosome. It is found in the multivesicular body. The protein resides in the midbody. Its activity is regulated as follows. May be regulated by aurB/Aurora kinase B-dependent phosphorylation. Functionally, probable core polymerisation component of the endosomal sorting required for transport (ESCRT) III complex involved in multiple cellular processes requiring the outward bending of membranes, including vesicle budding, membrane repair and cytokinesis. The ESCRT pathway involves 4 complexes (ESCRT-0, -I, -II and -III) that sequentially assemble on the cytoplasmic side of membranes and induce membrane remodeling, budding and scission. As part of the ESCRT-III complex, involved in the budding of intraluminal vesicles (ILVs) into endosomes to form multivesicular bodies (MVBs), which target their contents for degradation via the endolysosomal pathway. Involved in regulation of signal transduction pathways, including the Notch and BMP/decapentaplegic (dpp) pathways, by sequestering the intracellular domains of activated receptors into ILVs, isolating them from the cytoplasm and targeting them for lysosomal degradation. Involved in targeting ubiquitilated proteins, such as mono-ubiquitilanated N/Notch, to MVBs for degradation. Plays a role in wing development by regulating Notch signaling. Involved in abscission of germline cells during oogenesis. Involved in spermiogenesis. Required for efficient cytoplasmic isolation and abscission during cytokinesis of epithelial sensory organ precursor cells. May be involved in septate junction remodeling and maintenance. This is Charged multivesicular body protein 4 from Drosophila melanogaster (Fruit fly).